Reading from the N-terminus, the 219-residue chain is Glutathione S-transferase U19 (219 aa).

Residues 3-82 enclose the GST N-terminal domain; the sequence is NEVILLDFWP…YIDEVWSHKN (80 aa). Residues 13–14, 39–40, 53–54, and 66–67 contribute to the glutathione site; these read SM, NK, KI, and ES. In terms of domain architecture, GST C-terminal spans 88-208; it reads DPYLRAQARF…LPDPEKVTEF (121 aa). Ser-198 is modified (phosphoserine).

The protein belongs to the GST superfamily. Tau family.

It localises to the cytoplasm. It is found in the cytosol. It carries out the reaction RX + glutathione = an S-substituted glutathione + a halide anion + H(+). Functionally, catalyzes the glutathionylation of 12-oxophytodienoate (OPDA). In vitro, possesses glutathione S-transferase activity toward 1-chloro-2,4-dinitrobenzene (CDNB) and benzyl isothiocyanate (BITC), and glutathione peroxidase activity toward cumene hydroperoxide. In Arabidopsis thaliana (Mouse-ear cress), this protein is Glutathione S-transferase U19 (GSTU19).